The following is a 1125-amino-acid chain: Protein efr-3 (1125 aa).

Disordered stretches follow at residues 240–261, 471–493, 788–819, and 845–1093; these read RTSN…PNPI, RPSR…NGAA, TSPP…KDET, and QAGS…LGEK. Over residues 242-252 the composition is skewed to polar residues; that stretch reads SNATAQPSETT. The span at 788–798 shows a compositional bias: low complexity; it reads TSPPTSPTTSP. Residues 845 to 854 are compositionally biased toward polar residues; sequence QAGSSQTASL. A compositionally biased stretch (low complexity) spans 855 to 877; it reads NGTNGTHRNTVNNNNRLGVNGVT. Composition is skewed to polar residues over residues 878 to 896, 975 to 1011, and 1046 to 1071; these read SPNG…TGPN, LSFN…TQQL, and SRTT…TSSK.

This sequence belongs to the EFR3 family.

The sequence is that of Protein efr-3 (efr-3) from Neurospora crassa (strain ATCC 24698 / 74-OR23-1A / CBS 708.71 / DSM 1257 / FGSC 987).